The following is a 60-amino-acid chain: uncharacterized protein (60 aa).

Residues Leu19 to Tyr39 form a helical membrane-spanning segment.

It is found in the membrane. This is an uncharacterized protein from Saccharomyces cerevisiae (strain ATCC 204508 / S288c) (Baker's yeast).